The primary structure comprises 271 residues: Tryptophan synthase alpha chain (271 aa).

Residues E49 and D60 each act as proton acceptor in the active site.

The protein belongs to the TrpA family. As to quaternary structure, tetramer of two alpha and two beta chains.

It catalyses the reaction (1S,2R)-1-C-(indol-3-yl)glycerol 3-phosphate + L-serine = D-glyceraldehyde 3-phosphate + L-tryptophan + H2O. The protein operates within amino-acid biosynthesis; L-tryptophan biosynthesis; L-tryptophan from chorismate: step 5/5. The alpha subunit is responsible for the aldol cleavage of indoleglycerol phosphate to indole and glyceraldehyde 3-phosphate. The sequence is that of Tryptophan synthase alpha chain from Burkholderia mallei (strain NCTC 10247).